The primary structure comprises 379 residues: uncharacterized protein (379 aa).

The chain crosses the membrane as a helical span at residues 9–26 (YFQLITTIFLISSITIAA).

This sequence to A.liquefaciens L-sorbosone dehydrogenase.

It localises to the membrane. This is an uncharacterized protein from Borreliella burgdorferi (strain ATCC 35210 / DSM 4680 / CIP 102532 / B31) (Borrelia burgdorferi).